Here is a 514-residue protein sequence, read N- to C-terminus: 2,3-bisphosphoglycerate-independent phosphoglycerate mutase (514 aa).

Mn(2+) is bound by residues D14 and S64. S64 (phosphoserine intermediate) is an active-site residue. Substrate-binding positions include H125, R155 to D156, R187, R193, R263 to R266, and K336. Residues D403, H407, D444, H445, and H463 each coordinate Mn(2+).

This sequence belongs to the BPG-independent phosphoglycerate mutase family. In terms of assembly, monomer. Mn(2+) is required as a cofactor.

It catalyses the reaction (2R)-2-phosphoglycerate = (2R)-3-phosphoglycerate. It participates in carbohydrate degradation; glycolysis; pyruvate from D-glyceraldehyde 3-phosphate: step 3/5. Functionally, catalyzes the interconversion of 2-phosphoglycerate and 3-phosphoglycerate. The sequence is that of 2,3-bisphosphoglycerate-independent phosphoglycerate mutase from Salmonella choleraesuis (strain SC-B67).